Consider the following 359-residue polypeptide: MPNPSSTSSPYPLPEEIRNLLADVETFVADILKGENLSKKAKEKRESLIKKIKDVKSIYLQEFQDKGDAEDGEEYDDPFAGPPDTISLASERYDKDDEAPSDGAQFPPIAAQDLPFVLKAGYLEKRRKDHSFLGFEWQKRWCALSKTVFYYYGSDKDKQQKGEFAIDGYSVRMNNTLRKDGKKDCCFEISAPDKRIYQFTAASPKDAEEWVQQLKFVLQDMESDIIPEDYDERGELYDDVDHPLPISNPLTSSQPIDDEIYEELPEEEEDSAPVKVEEQRKMSQDSVHHTSGDKSTDYANFYQGLWDCTGAFSDELSFKRGDVIYILSKEYNRYGWWVGEMKGAIGLVPKAYIMEMYDI.

3 positions are modified to phosphoserine: S5, S6, and S9. The segment at 14 to 64 (PEEIRNLLADVETFVADILKGENLSKKAKEKRESLIKKIKDVKSIYLQEFQ) is homodimerization. Residues 66 to 88 (KGDAEDGEEYDDPFAGPPDTISL) are disordered. Y75 is modified (phosphotyrosine). A phosphoserine mark is found at S87 and S90. The PH domain maps to 116 to 219 (FVLKAGYLEK…WVQQLKFVLQ (104 aa)). 2 positions are modified to phosphotyrosine: Y151 and Y197. Position 223 is a phosphoserine (S223). Y261 carries the post-translational modification Phosphotyrosine. Positions 264 to 293 (LPEEEEDSAPVKVEEQRKMSQDSVHHTSGD) are disordered. A compositionally biased stretch (basic and acidic residues) spans 275–293 (KVEEQRKMSQDSVHHTSGD). Phosphoserine occurs at positions 283 and 286. Residues 297–358 (DYANFYQGLW…PKAYIMEMYD (62 aa)) form the SH3 domain.

Belongs to the SKAP family. Homodimer. Interacts with PTPNS1. Part of a complex consisting of SKAP2, FYB1 and PTPNS1. Part of a complex consisting of SKAP2, FYB1 and LILRB3. May interact with actin. Interacts with FYB1, which is required for SKAP2 protein stability. Interacts with LAT, GRB2, PTK2B and PRAM1. May interact with FYN, HCK and LYN. Interacts with FASLG. In terms of processing, phosphorylated in resting platelets. Phosphorylated by FYN on Tyr-261 upon T-cell activation. Dephosphorylated on Tyr-75 by PTPN22. As to expression, ubiquitously expressed. Present in platelets (at protein level).

The protein localises to the cytoplasm. In terms of biological role, may be involved in B-cell and macrophage adhesion processes. In B-cells, may act by coupling the B-cell receptor (BCR) to integrin activation. May play a role in src signaling pathway. This is Src kinase-associated phosphoprotein 2 (SKAP2) from Homo sapiens (Human).